Reading from the N-terminus, the 124-residue chain is Flagellar transcriptional regulator FlhD (124 aa).

It belongs to the FlhD family. Homodimer; disulfide-linked. Forms a heterohexamer composed of two FlhC and four FlhD subunits. Each FlhC binds a FlhD dimer, forming a heterotrimer, and a hexamer assembles by dimerization of two heterotrimers.

The protein resides in the cytoplasm. Functions in complex with FlhC as a master transcriptional regulator that regulates transcription of several flagellar and non-flagellar operons by binding to their promoter region. Activates expression of class 2 flagellar genes, including fliA, which is a flagellum-specific sigma factor that turns on the class 3 genes. Also regulates genes whose products function in a variety of physiological pathways. In Pectobacterium carotovorum (Erwinia carotovora), this protein is Flagellar transcriptional regulator FlhD.